A 434-amino-acid polypeptide reads, in one-letter code: Serine hydroxymethyltransferase (434 aa).

(6S)-5,6,7,8-tetrahydrofolate-binding positions include leucine 128 and 132-134 (GHL). Lysine 237 is modified (N6-(pyridoxal phosphate)lysine).

Belongs to the SHMT family. As to quaternary structure, homodimer. It depends on pyridoxal 5'-phosphate as a cofactor.

It localises to the cytoplasm. It catalyses the reaction (6R)-5,10-methylene-5,6,7,8-tetrahydrofolate + glycine + H2O = (6S)-5,6,7,8-tetrahydrofolate + L-serine. Its pathway is one-carbon metabolism; tetrahydrofolate interconversion. The protein operates within amino-acid biosynthesis; glycine biosynthesis; glycine from L-serine: step 1/1. Functionally, catalyzes the reversible interconversion of serine and glycine with tetrahydrofolate (THF) serving as the one-carbon carrier. This reaction serves as the major source of one-carbon groups required for the biosynthesis of purines, thymidylate, methionine, and other important biomolecules. Also exhibits THF-independent aldolase activity toward beta-hydroxyamino acids, producing glycine and aldehydes, via a retro-aldol mechanism. The sequence is that of Serine hydroxymethyltransferase from Corynebacterium efficiens (strain DSM 44549 / YS-314 / AJ 12310 / JCM 11189 / NBRC 100395).